A 183-amino-acid chain; its full sequence is Bifunctional protein PyrR (183 aa).

Positions 102–114 (VVLVDDVLYTGRT) match the PRPP-binding motif.

This sequence belongs to the purine/pyrimidine phosphoribosyltransferase family. PyrR subfamily. In terms of assembly, homodimer and homohexamer; in equilibrium.

The catalysed reaction is UMP + diphosphate = 5-phospho-alpha-D-ribose 1-diphosphate + uracil. In terms of biological role, regulates transcriptional attenuation of the pyrimidine nucleotide (pyr) operon by binding in a uridine-dependent manner to specific sites on pyr mRNA. This disrupts an antiterminator hairpin in the RNA and favors formation of a downstream transcription terminator, leading to a reduced expression of downstream genes. Also displays a weak uracil phosphoribosyltransferase activity which is not physiologically significant. This chain is Bifunctional protein PyrR, found in Listeria monocytogenes serotype 4b (strain CLIP80459).